The following is a 458-amino-acid chain: Light-independent protochlorophyllide reductase subunit N (458 aa).

[4Fe-4S] cluster-binding residues include cysteine 20, cysteine 45, and cysteine 105.

The protein belongs to the BchN/ChlN family. In terms of assembly, protochlorophyllide reductase is composed of three subunits; ChlL, ChlN and ChlB. Forms a heterotetramer of two ChlB and two ChlN subunits. Requires [4Fe-4S] cluster as cofactor.

The protein localises to the plastid. Its subcellular location is the chloroplast. It carries out the reaction chlorophyllide a + oxidized 2[4Fe-4S]-[ferredoxin] + 2 ADP + 2 phosphate = protochlorophyllide a + reduced 2[4Fe-4S]-[ferredoxin] + 2 ATP + 2 H2O. It participates in porphyrin-containing compound metabolism; chlorophyll biosynthesis (light-independent). Functionally, component of the dark-operative protochlorophyllide reductase (DPOR) that uses Mg-ATP and reduced ferredoxin to reduce ring D of protochlorophyllide (Pchlide) to form chlorophyllide a (Chlide). This reaction is light-independent. The NB-protein (ChlN-ChlB) is the catalytic component of the complex. The chain is Light-independent protochlorophyllide reductase subunit N from Angiopteris evecta (Mule's foot fern).